The primary structure comprises 266 residues: Glucosamine-6-phosphate deaminase (266 aa).

Aspartate 72 serves as the catalytic Proton acceptor; for enolization step. Aspartate 141 acts as the For ring-opening step in catalysis. Histidine 143 functions as the Proton acceptor; for ring-opening step in the catalytic mechanism. Glutamate 148 functions as the For ring-opening step in the catalytic mechanism.

It belongs to the glucosamine/galactosamine-6-phosphate isomerase family. NagB subfamily. In terms of assembly, homohexamer; trimer of disulfide-linked dimers.

It carries out the reaction alpha-D-glucosamine 6-phosphate + H2O = beta-D-fructose 6-phosphate + NH4(+). Its pathway is amino-sugar metabolism; N-acetylneuraminate degradation; D-fructose 6-phosphate from N-acetylneuraminate: step 5/5. With respect to regulation, allosterically activated by N-acetylglucosamine 6-phosphate (GlcNAc6P). In terms of biological role, catalyzes the reversible isomerization-deamination of glucosamine 6-phosphate (GlcN6P) to form fructose 6-phosphate (Fru6P) and ammonium ion. The protein is Glucosamine-6-phosphate deaminase of Vibrio parahaemolyticus serotype O3:K6 (strain RIMD 2210633).